Consider the following 188-residue polypeptide: Elongation factor P (188 aa).

Belongs to the elongation factor P family.

Its subcellular location is the cytoplasm. It participates in protein biosynthesis; polypeptide chain elongation. Functionally, involved in peptide bond synthesis. Stimulates efficient translation and peptide-bond synthesis on native or reconstituted 70S ribosomes in vitro. Probably functions indirectly by altering the affinity of the ribosome for aminoacyl-tRNA, thus increasing their reactivity as acceptors for peptidyl transferase. This is Elongation factor P from Sulfurovum sp. (strain NBC37-1).